The sequence spans 294 residues: N-acetylmuramic acid 6-phosphate etherase (294 aa).

Residues 54–217 enclose the SIS domain; sequence VIQSFEEEGR…STASMIGVGK (164 aa). The active-site Proton donor is the glutamate 82. The active site involves glutamate 113.

Belongs to the GCKR-like family. MurNAc-6-P etherase subfamily. As to quaternary structure, homodimer.

The enzyme catalyses N-acetyl-D-muramate 6-phosphate + H2O = N-acetyl-D-glucosamine 6-phosphate + (R)-lactate. Its pathway is amino-sugar metabolism; N-acetylmuramate degradation. In terms of biological role, specifically catalyzes the cleavage of the D-lactyl ether substituent of MurNAc 6-phosphate, producing GlcNAc 6-phosphate and D-lactate. The sequence is that of N-acetylmuramic acid 6-phosphate etherase from Bacillus thuringiensis subsp. konkukian (strain 97-27).